A 1086-amino-acid polypeptide reads, in one-letter code: ATP-dependent helicase/deoxyribonuclease subunit B (1086 aa).

The protein belongs to the helicase family. AddB/RexB type 2 subfamily. As to quaternary structure, heterodimer of AddA and RexB. It depends on Mg(2+) as a cofactor.

The heterodimer acts as both an ATP-dependent DNA helicase and an ATP-dependent, dual-direction single-stranded exonuclease. Recognizes the chi site generating a DNA molecule suitable for the initiation of homologous recombination. This subunit has 5' -&gt; 3' nuclease activity but not helicase activity. This chain is ATP-dependent helicase/deoxyribonuclease subunit B, found in Streptococcus uberis (strain ATCC BAA-854 / 0140J).